Here is a 410-residue protein sequence, read N- to C-terminus: Elongation factor Tu, chloroplastic (410 aa).

In terms of domain architecture, tr-type G spans 10–215; the sequence is KPHVNIGTIG…NVDSYIPTPE (206 aa). The interval 19 to 26 is G1; it reads GHVDHGKT. A GTP-binding site is contributed by 19-26; sequence GHVDHGKT. Residue Thr26 coordinates Mg(2+). A G2 region spans residues 61 to 65; sequence GITIN. Positions 82–85 are G3; that stretch reads DCPG. GTP-binding positions include 82 to 86 and 137 to 140; these read DCPGH and NKKD. The tract at residues 137–140 is G4; that stretch reads NKKD. The G5 stretch occupies residues 175-177; the sequence is SAL.

Belongs to the TRAFAC class translation factor GTPase superfamily. Classic translation factor GTPase family. EF-Tu/EF-1A subfamily.

The protein resides in the plastid. The protein localises to the chloroplast. It catalyses the reaction GTP + H2O = GDP + phosphate + H(+). Its function is as follows. GTP hydrolase that promotes the GTP-dependent binding of aminoacyl-tRNA to the A-site of ribosomes during protein biosynthesis. The polypeptide is Elongation factor Tu, chloroplastic (tufA) (Oltmannsiellopsis viridis (Marine flagellate)).